The chain runs to 509 residues: MKKTIYITTPIYYPSGDLHLGHIYSTNIAWVLRNYKKIQGYETFFSTGSDEHGQKIFNKAQELKLETQDYVDRQANKFIDFWKKANIDYDFFARTTNKEHKEVVREIFHKLKEKNIIYLDKYVGLYSVSDEEFLTETQALKKDNKFFHPVSNHELIKIEEESYFFNLNLFIDWIKEFLDQDIISSKAIVNELKSNFINKGLENLSVTRIKLDWGIKIDQSSKHVIYVWLDALFQYLTNLGYGSKNQSLYEKFWKNGDERVHVVGKEITRFHCIYWPIFLKSLNVKMPTKIISHGWIVTPEGKMSKSKGNVVDPVVLIEKYGSEVLKYFLIAKLSIKKDGVFSEELLVSAYNNDLVNTFSNLISRTVKMILNNYDRPLSFILSKDQEDLEIEKDIKNSFETFCSFAEEYEFDKAFESTINLGKKLNLYIDKTRPWLLTKEDQKLEIVLNRLLNGIYAMAFELSIVMPQTSQKLAKALGFESFEKSKLEDFKKFDNIKIEKIENLFNRIKL.

The 'HIGH' region signature appears at 12–22 (YYPSGDLHLGH). The 'KMSKS' region motif lies at 302–306 (KMSKS). K305 is an ATP binding site.

It belongs to the class-I aminoacyl-tRNA synthetase family. MetG type 2B subfamily. As to quaternary structure, monomer.

The protein resides in the cytoplasm. It carries out the reaction tRNA(Met) + L-methionine + ATP = L-methionyl-tRNA(Met) + AMP + diphosphate. Is required not only for elongation of protein synthesis but also for the initiation of all mRNA translation through initiator tRNA(fMet) aminoacylation. In Mycoplasmopsis pulmonis (strain UAB CTIP) (Mycoplasma pulmonis), this protein is Methionine--tRNA ligase (metG).